Reading from the N-terminus, the 1172-residue chain is Thrombospondin-2 (1172 aa).

Positions 1-18 (MLWALALLALGIGPRASA) are cleaved as a signal peptide. A Laminin G-like domain is found at 19 to 215 (GDHVKDTSFD…LQNVHLVFAD (197 aa)). Residues 19-232 (GDHVKDTSFD…KKGCQHSQGA (214 aa)) form a heparin-binding region. N-linked (GlcNAc...) asparagine glycans are attached at residues Asn-151, Asn-316, and Asn-330. One can recognise a VWFC domain in the interval 318–375 (SACVQEGRIFAENETWVVDSCTTCTCKKFKTVCHQITCSPATCANPSFVEGECCPSCS). 3 TSP type-1 domains span residues 381-431 (DEGW…GKCD), 437-492 (NGGW…DPCP), and 494-549 (DGRW…RSCP). Intrachain disulfides connect Cys-393/Cys-425, Cys-397/Cys-430, Cys-408/Cys-415, Cys-449/Cys-486, Cys-453/Cys-491, Cys-464/Cys-476, Cys-506/Cys-543, Cys-510/Cys-548, Cys-521/Cys-533, Cys-553/Cys-564, Cys-558/Cys-574, Cys-577/Cys-588, Cys-594/Cys-610, Cys-601/Cys-619, Cys-622/Cys-646, Cys-652/Cys-665, Cys-659/Cys-678, Cys-680/Cys-691, Cys-707/Cys-715, Cys-720/Cys-740, Cys-756/Cys-776, Cys-779/Cys-799, Cys-815/Cys-835, Cys-838/Cys-858, Cys-876/Cys-896, Cys-912/Cys-932, and Cys-948/Cys-1169. Asn-457 is a glycosylation site (N-linked (GlcNAc...) asparagine). Positions 549 to 589 (PIDGCLSNPCFPGAKCNSFPDGSWSCGSCPVGFLGNGTHCE) constitute an EGF-like 1 domain. The N-linked (GlcNAc...) asparagine glycan is linked to Asn-584. In terms of domain architecture, EGF-like 2 spans 648–692 (PENPCKDKTHSCHKNAECIYLGHFSDPMYKCECQIGYAGDGLICG). 8 TSP type-3 repeats span residues 693 to 728 (EDSD…NSGQ), 729 to 764 (EDFD…NPRQ), 765 to 787 (LDYD…NPAQ), 788 to 823 (IDTD…NTDQ), 824 to 846 (RDTD…NPDQ), 847 to 884 (IDQD…NSNQ), 885 to 920 (ADHD…NPDQ), and 921 to 956 (EDSD…AITE). N-linked (GlcNAc...) asparagine glycosylation is present at Asn-710. Residues 727 to 752 (GQEDFDKDGIGDACDEDDDNDGVSDE) are disordered. A compositionally biased stretch (acidic residues) spans 739–749 (ACDEDDDNDGV). The segment at 846-938 (QIDQDNDLVG…GDICKDDFDN (93 aa)) is disordered. Over residues 847–866 (IDQDNDLVGDQCDNNEDIDD) the composition is skewed to acidic residues. The span at 870-884 (QNNQDNCPYISNSNQ) shows a compositional bias: polar residues. A compositionally biased stretch (basic and acidic residues) spans 885 to 895 (ADHDNDGKGDA). The span at 896 to 905 (CDSDDDNDGV) shows a compositional bias: acidic residues. Basic and acidic residues predominate over residues 925–935 (GDGRGDICKDD). The Cell attachment site motif lies at 928-930 (RGD). A TSP C-terminal domain is found at 960–1172 (RNFQMVPLDP…SDLKYECRDA (213 aa)). A glycan (N-linked (GlcNAc...) asparagine) is linked at Asn-1069.

It belongs to the thrombospondin family. As to quaternary structure, homotrimer; disulfide-linked. Can bind to fibrinogen, fibronectin, laminin and type V collagen. Interacts (via the TSP type I repeats) with CD36; the interaction conveys an antiangiogenic effect. Interacts (via the TSP type I repeats) with HRG; the interaction blocks the antiangiogenic effect of THBS2 with CD36. Can bind to fibrinogen, fibronectin, laminin.

In terms of biological role, adhesive glycoprotein that mediates cell-to-cell and cell-to-matrix interactions. Ligand for CD36 mediating antiangiogenic properties. The polypeptide is Thrombospondin-2 (Thbs2) (Mus musculus (Mouse)).